Here is a 1414-residue protein sequence, read N- to C-terminus: DNA-directed RNA polymerase subunit beta' (1414 aa).

Residues Cys-70, Cys-72, Cys-85, and Cys-88 each coordinate Zn(2+). Mg(2+)-binding residues include Asp-460, Asp-462, and Asp-464. Residues Cys-814, Cys-888, Cys-895, and Cys-898 each coordinate Zn(2+). Residues 1392–1403 show a composition bias toward low complexity; it reads EQALSEALKSSA. The tract at residues 1392–1414 is disordered; that stretch reads EQALSEALKSSAPQEAKAAQKDE.

It belongs to the RNA polymerase beta' chain family. As to quaternary structure, the RNAP catalytic core consists of 2 alpha, 1 beta, 1 beta' and 1 omega subunit. When a sigma factor is associated with the core the holoenzyme is formed, which can initiate transcription. The cofactor is Mg(2+). It depends on Zn(2+) as a cofactor.

It catalyses the reaction RNA(n) + a ribonucleoside 5'-triphosphate = RNA(n+1) + diphosphate. Functionally, DNA-dependent RNA polymerase catalyzes the transcription of DNA into RNA using the four ribonucleoside triphosphates as substrates. The sequence is that of DNA-directed RNA polymerase subunit beta' from Coxiella burnetii (strain Dugway 5J108-111).